The sequence spans 315 residues: 4-hydroxy-3-methylbut-2-enyl diphosphate reductase (315 aa).

A [4Fe-4S] cluster-binding site is contributed by Cys12. 2 residues coordinate (2E)-4-hydroxy-3-methylbut-2-enyl diphosphate: His41 and His74. Residues His41 and His74 each coordinate dimethylallyl diphosphate. Positions 41 and 74 each coordinate isopentenyl diphosphate. Cys96 provides a ligand contact to [4Fe-4S] cluster. Residue His124 coordinates (2E)-4-hydroxy-3-methylbut-2-enyl diphosphate. His124 contributes to the dimethylallyl diphosphate binding site. Isopentenyl diphosphate is bound at residue His124. Glu126 acts as the Proton donor in catalysis. A (2E)-4-hydroxy-3-methylbut-2-enyl diphosphate-binding site is contributed by Thr168. Cys198 contacts [4Fe-4S] cluster. 4 residues coordinate (2E)-4-hydroxy-3-methylbut-2-enyl diphosphate: Ser226, Ser227, Asn228, and Ser270. Dimethylallyl diphosphate is bound by residues Ser226, Ser227, Asn228, and Ser270. Isopentenyl diphosphate is bound by residues Ser226, Ser227, Asn228, and Ser270.

It belongs to the IspH family. [4Fe-4S] cluster is required as a cofactor.

It carries out the reaction isopentenyl diphosphate + 2 oxidized [2Fe-2S]-[ferredoxin] + H2O = (2E)-4-hydroxy-3-methylbut-2-enyl diphosphate + 2 reduced [2Fe-2S]-[ferredoxin] + 2 H(+). The enzyme catalyses dimethylallyl diphosphate + 2 oxidized [2Fe-2S]-[ferredoxin] + H2O = (2E)-4-hydroxy-3-methylbut-2-enyl diphosphate + 2 reduced [2Fe-2S]-[ferredoxin] + 2 H(+). Its pathway is isoprenoid biosynthesis; dimethylallyl diphosphate biosynthesis; dimethylallyl diphosphate from (2E)-4-hydroxy-3-methylbutenyl diphosphate: step 1/1. It functions in the pathway isoprenoid biosynthesis; isopentenyl diphosphate biosynthesis via DXP pathway; isopentenyl diphosphate from 1-deoxy-D-xylulose 5-phosphate: step 6/6. Its function is as follows. Catalyzes the conversion of 1-hydroxy-2-methyl-2-(E)-butenyl 4-diphosphate (HMBPP) into a mixture of isopentenyl diphosphate (IPP) and dimethylallyl diphosphate (DMAPP). Acts in the terminal step of the DOXP/MEP pathway for isoprenoid precursor biosynthesis. The polypeptide is 4-hydroxy-3-methylbut-2-enyl diphosphate reductase (Pseudomonas savastanoi pv. phaseolicola (strain 1448A / Race 6) (Pseudomonas syringae pv. phaseolicola (strain 1448A / Race 6))).